The sequence spans 213 residues: Glutathione S-transferase DHAR1, mitochondrial (213 aa).

Glutathione-binding residues include Lys8 and Asp19. The L-ascorbate site is built by Lys8 and Asp19. The region spanning Ala10–Lys83 is the GST N-terminal domain. Residue Cys20 is the Nucleophile of the active site. Cys20 bears the S-glutathionyl cysteine mark. Residues Cys20–Arg25 carry the Glutathione-binding motif. Glutathione contacts are provided by Lys47, Val60, and Ser73. Residues Tyr84 to Pro213 form the GST C-terminal domain. A Copper-binding motif is present at residues His133–His137. The glutathione site is built by His160 and Trp207. An L-ascorbate-binding site is contributed by Lys210.

The protein belongs to the GST superfamily. DHAR family. Monomer. Interacts with copper (Cu). Spontaneous S-glutathionylation in the presence of oxidized glutathione (GSSG). As to expression, expressed at least in roots and leaves.

It is found in the mitochondrion. Its subcellular location is the cytoplasm. The protein localises to the cytosol. The protein resides in the peroxisome. It localises to the membrane. The enzyme catalyses RX + glutathione = an S-substituted glutathione + a halide anion + H(+). It catalyses the reaction L-dehydroascorbate + 2 glutathione = glutathione disulfide + L-ascorbate. In terms of biological role, displays a dual function. As a soluble protein, exhibits glutathione-dependent thiol transferase and dehydroascorbate (DHA) reductase activities. Key component of the ascorbate recycling system. Involved in the redox homeostasis, especially in scavenging of ROS under oxidative stresses, subsequently to biotic or abiotic inducers. As a peripheral membrane protein, could also function as voltage-gated ion channel. This Arabidopsis thaliana (Mouse-ear cress) protein is Glutathione S-transferase DHAR1, mitochondrial.